The primary structure comprises 388 residues: Probable E3 ubiquitin-protein ligase LOG2 (388 aa).

Residues 1–43 are disordered; that stretch reads MGNISSSGGEGRRRRRRNHTAAPPPPPPPPSSSLPPPPLPTEI. Residue Gly-2 is the site of N-myristoyl glycine attachment. Residues 22–40 show a composition bias toward pro residues; it reads APPPPPPPPSSSLPPPPLP. Residues 159–281 form a DAR2 domain region; the sequence is FTFDATVSGR…GEIKIRVVKQ (123 aa). The segment at 319 to 358 adopts an RING-type; atypical zinc-finger fold; the sequence is CVICLSEPRDTTVLPCRHMCMCSGCAKVLRFQTNRCPICR. The tract at residues 368–388 is disordered; it reads KVHGNNGSGNNTGQGETVEQE.

The protein belongs to the RING-type zinc finger family. LOG2 subfamily. In terms of assembly, interacts with GDU1. In terms of processing, myristoylated (in vitro). In terms of tissue distribution, expressed in the vascular tissues in both phloem and xylem parenchyma cells.

Its subcellular location is the cell membrane. The catalysed reaction is S-ubiquitinyl-[E2 ubiquitin-conjugating enzyme]-L-cysteine + [acceptor protein]-L-lysine = [E2 ubiquitin-conjugating enzyme]-L-cysteine + N(6)-ubiquitinyl-[acceptor protein]-L-lysine.. The protein operates within protein modification; protein ubiquitination. Functionally, acts as an E3 ubiquitin-protein ligase, or as part of E3 complex, which accepts ubiquitin from specific E2 ubiquitin-conjugating enzymes and then transfers it to substrates (in vitro). Required for GLUTAMINE DUMPER 1(GDU1)-induced amino acid secretion and for amino acid homeostasis. Ubiquitinates GDU1 (in vitro). This chain is Probable E3 ubiquitin-protein ligase LOG2 (LOG2), found in Arabidopsis thaliana (Mouse-ear cress).